The sequence spans 89 residues: FXYD domain-containing ion transport regulator 4 (89 aa).

Residues 1–20 (MERVTLALLLLAGLTALEAN) form the signal peptide. Residues 21-38 (DPFANKDDPFYYDWKNLQ) are Extracellular-facing. The chain crosses the membrane as a helical span at residues 39–59 (LSGLICGGLLAIAGIAAVLSG). Topologically, residues 60–89 (KCKCKSSQKQHSPVPEKAIPLITPGSATTC) are cytoplasmic.

Belongs to the FXYD family. In terms of assembly, regulatory subunit of the sodium/potassium-transporting ATPase which is composed of a catalytic alpha subunit, a non-catalytic beta subunit and a regulatory subunit. The regulatory subunit, a member of the FXYD protein family, modulates the enzymatic activity in a tissue- and isoform-specific way by changing affinities of the Na+/K+-ATPase toward Na(+), K(+) or ATP.

It localises to the cell membrane. It is found in the basolateral cell membrane. Functionally, associates with and regulates the activity of the sodium/potassium-transporting ATPase (NKA) which catalyzes the hydrolysis of ATP coupled with the exchange of Na(+) and K(+) ions across the plasma membrane. Increases the apparent affinity of the transporter for Na(+) and increases NKA activity. This is FXYD domain-containing ion transport regulator 4 (FXYD4) from Homo sapiens (Human).